Here is a 360-residue protein sequence, read N- to C-terminus: uncharacterized protein (360 aa).

Positions 19–179 (LALGSGGARG…LDPLPMAPIA (161 aa)) constitute a PNPLA domain. The GXSXG signature appears at 50–54 (GSSMG). Ser52 (nucleophile) is an active-site residue. Residue Asp166 is the Proton acceptor of the active site. The DGA/G motif lies at 166–168 (DGG). The disordered stretch occupies residues 251–282 (DSWSQAPEIEQRPAGPPADREEAADTPGLPKM).

It belongs to the NTE family.

This is an uncharacterized protein from Mycobacterium bovis (strain ATCC BAA-935 / AF2122/97).